Here is a 134-residue protein sequence, read N- to C-terminus: DNA-directed RNA polymerase subunit omega (134 aa).

This sequence belongs to the RNA polymerase subunit omega family. As to quaternary structure, the RNAP catalytic core consists of 2 alpha, 1 beta, 1 beta' and 1 omega subunit. When a sigma factor is associated with the core the holoenzyme is formed, which can initiate transcription.

The catalysed reaction is RNA(n) + a ribonucleoside 5'-triphosphate = RNA(n+1) + diphosphate. Its function is as follows. Promotes RNA polymerase assembly. Latches the N- and C-terminal regions of the beta' subunit thereby facilitating its interaction with the beta and alpha subunits. In Rhizobium etli (strain CIAT 652), this protein is DNA-directed RNA polymerase subunit omega.